Reading from the N-terminus, the 353-residue chain is Stomatin-like protein 2, mitochondrial (353 aa).

The N-terminal 28 residues, 1 to 28 (MLARAARGTGALLLRGSVQASGRIPRRA), are a transit peptide targeting the mitochondrion. Serine 17 bears the Phosphoserine; by PKC/PRKCZ mark. The residue at position 124 (tyrosine 124) is a Phosphotyrosine. The residue at position 145 (lysine 145) is an N6-acetyllysine; alternate. Lysine 145 is modified (N6-succinyllysine; alternate). Residues 215–252 (INVAEGKKQAQILASEAEKAEQINQAAGEASAVLAKAK) are a coiled coil. Residue lysine 233 is modified to N6-acetyllysine. A disordered region spans residues 324–353 (VPGAQNSSEARRDVQTTDTSIEELGRVKLS). A Phosphoserine modification is found at serine 330.

The protein belongs to the band 7/mec-2 family. Forms homooligomers. Interacts with MFN2; may form heterooligomers. Interacts with PHB1 and PHB2; recruits them to cardiolipin-enriched mitochondrial membranes and stabilizes them. Interacts with CACNA2D2.

The protein resides in the cell membrane. Its subcellular location is the mitochondrion. It is found in the mitochondrion inner membrane. The protein localises to the mitochondrion intermembrane space. It localises to the membrane raft. The protein resides in the cytoplasm. Its subcellular location is the cytoskeleton. Mitochondrial protein that probably regulates the biogenesis and the activity of mitochondria. Stimulates cardiolipin biosynthesis, binds cardiolipin-enriched membranes where it recruits and stabilizes some proteins including prohibitin and may therefore act in the organization of functional microdomains in mitochondrial membranes. Through regulation of the mitochondrial function may play a role into several biological processes including cell migration, cell proliferation, T-cell activation, calcium homeostasis and cellular response to stress. May play a role in calcium homeostasis through negative regulation of calcium efflux from mitochondria. Required for mitochondrial hyperfusion a pro-survival cellular response to stress which results in increased ATP production by mitochondria. May also regulate the organization of functional domains at the plasma membrane and play a role in T-cell activation through association with the T-cell receptor signaling complex and its regulation. This is Stomatin-like protein 2, mitochondrial (Stoml2) from Rattus norvegicus (Rat).